The chain runs to 134 residues: Profilin-5 (134 aa).

A disulfide bridge links C13 with C118. Positions 84–100 (AVIRGKKGSGGITIKKT) match the Involved in PIP2 interaction motif. Phosphothreonine is present on T114.

It belongs to the profilin family. Occurs in many kinds of cells as a complex with monomeric actin in a 1:1 ratio. In terms of processing, phosphorylated by MAP kinases.

Its subcellular location is the cytoplasm. It is found in the cytoskeleton. Functionally, binds to actin and affects the structure of the cytoskeleton. At high concentrations, profilin prevents the polymerization of actin, whereas it enhances it at low concentrations. The protein is Profilin-5 of Olea europaea (Common olive).